The chain runs to 158 residues: NAD(P)H-quinone oxidoreductase subunit J, chloroplastic (158 aa).

The protein belongs to the complex I 30 kDa subunit family. As to quaternary structure, NDH is composed of at least 16 different subunits, 5 of which are encoded in the nucleus.

It localises to the plastid. The protein localises to the chloroplast thylakoid membrane. The catalysed reaction is a plastoquinone + NADH + (n+1) H(+)(in) = a plastoquinol + NAD(+) + n H(+)(out). It catalyses the reaction a plastoquinone + NADPH + (n+1) H(+)(in) = a plastoquinol + NADP(+) + n H(+)(out). NDH shuttles electrons from NAD(P)H:plastoquinone, via FMN and iron-sulfur (Fe-S) centers, to quinones in the photosynthetic chain and possibly in a chloroplast respiratory chain. The immediate electron acceptor for the enzyme in this species is believed to be plastoquinone. Couples the redox reaction to proton translocation, and thus conserves the redox energy in a proton gradient. The sequence is that of NAD(P)H-quinone oxidoreductase subunit J, chloroplastic from Nasturtium officinale (Watercress).